The sequence spans 534 residues: Glucans biosynthesis protein D (534 aa).

The segment at residues 1–26 is a signal peptide (tat-type signal); sequence MQRRDFIRNASLALAAFGLPSLPACA.

Belongs to the OpgD/OpgG family. Predicted to be exported by the Tat system. The position of the signal peptide cleavage has not been experimentally proven.

It localises to the periplasm. It participates in glycan metabolism; osmoregulated periplasmic glucan (OPG) biosynthesis. Probably involved in the control of the structural glucose backbone of osmoregulated periplasmic glucans (OPGs). This Stenotrophomonas maltophilia (strain K279a) protein is Glucans biosynthesis protein D.